Reading from the N-terminus, the 352-residue chain is Chorismate synthase (352 aa).

R48 and R54 together coordinate NADP(+). FMN-binding positions include 125–127, 238–239, G278, 293–297, and R319; these read RSS, NA, and KPTSS.

It belongs to the chorismate synthase family. Homotetramer. FMNH2 serves as cofactor.

It catalyses the reaction 5-O-(1-carboxyvinyl)-3-phosphoshikimate = chorismate + phosphate. It participates in metabolic intermediate biosynthesis; chorismate biosynthesis; chorismate from D-erythrose 4-phosphate and phosphoenolpyruvate: step 7/7. In terms of biological role, catalyzes the anti-1,4-elimination of the C-3 phosphate and the C-6 proR hydrogen from 5-enolpyruvylshikimate-3-phosphate (EPSP) to yield chorismate, which is the branch point compound that serves as the starting substrate for the three terminal pathways of aromatic amino acid biosynthesis. This reaction introduces a second double bond into the aromatic ring system. The sequence is that of Chorismate synthase from Bordetella avium (strain 197N).